Consider the following 80-residue polypeptide: UPF0291 protein llmg_1475 (80 aa).

The protein belongs to the UPF0291 family.

It is found in the cytoplasm. The sequence is that of UPF0291 protein llmg_1475 from Lactococcus lactis subsp. cremoris (strain MG1363).